A 578-amino-acid chain; its full sequence is Putative transporter B0361.11 (578 aa).

Positions 1 to 30 are disordered; the sequence is MSISRRSYEQFDEMKSENQENNSKKKSSER. The next 11 helical transmembrane spans lie at 51–71, 148–168, 182–202, 232–252, 263–283, 339–359, 373–393, 399–419, 426–446, 457–477, and 486–506; these read IFTY…MYIM, FGLT…SMLA, ILAF…IFLI, AWIT…TLLV, YFIV…LPES, IWLL…YFAI, AFLY…PLMM, MIVI…TVFL, LVIM…HPIW, SLCF…SPYV, and WIPF…AFML. The span at 532–550 shows a compositional bias: low complexity; the sequence is AYRRSKSSSSSVSALSKTS. Residues 532 to 561 form a disordered region; it reads AYRRSKSSSSSVSALSKTSVRSKKTLSSES.

The protein belongs to the major facilitator superfamily. Sugar transporter (TC 2.A.1.1) family.

The protein localises to the membrane. In Caenorhabditis elegans, this protein is Putative transporter B0361.11.